Here is a 290-residue protein sequence, read N- to C-terminus: ATP synthase gamma chain (290 aa).

Belongs to the ATPase gamma chain family. As to quaternary structure, F-type ATPases have 2 components, CF(1) - the catalytic core - and CF(0) - the membrane proton channel. CF(1) has five subunits: alpha(3), beta(3), gamma(1), delta(1), epsilon(1). CF(0) has three main subunits: a, b and c.

It localises to the cell membrane. Its function is as follows. Produces ATP from ADP in the presence of a proton gradient across the membrane. The gamma chain is believed to be important in regulating ATPase activity and the flow of protons through the CF(0) complex. This Buchnera aphidicola subsp. Diuraphis noxia protein is ATP synthase gamma chain.